Reading from the N-terminus, the 149-residue chain is uncharacterized protein (149 aa).

Positions 111–140 (HKALEKATELIENEEELLKREGIKRENLKF) form a coiled coil.

This is an uncharacterized protein from Aquifex aeolicus (strain VF5).